The sequence spans 404 residues: Glucose-1-phosphate adenylyltransferase (404 aa).

Residues Y99, G164, 179–180 (EK), and S197 each bind alpha-D-glucose 1-phosphate.

The protein belongs to the bacterial/plant glucose-1-phosphate adenylyltransferase family. In terms of assembly, homotetramer.

The enzyme catalyses alpha-D-glucose 1-phosphate + ATP + H(+) = ADP-alpha-D-glucose + diphosphate. Its pathway is glycan biosynthesis; glycogen biosynthesis. Its function is as follows. Involved in the biosynthesis of ADP-glucose, a building block required for the elongation reactions to produce glycogen. Catalyzes the reaction between ATP and alpha-D-glucose 1-phosphate (G1P) to produce pyrophosphate and ADP-Glc. The chain is Glucose-1-phosphate adenylyltransferase from Rhodococcus erythropolis (strain PR4 / NBRC 100887).